Reading from the N-terminus, the 253-residue chain is Imidazole glycerol phosphate synthase subunit HisF (253 aa).

Residues Asp13 and Asp132 contribute to the active site.

Belongs to the HisA/HisF family. As to quaternary structure, heterodimer of HisH and HisF.

The protein localises to the cytoplasm. It catalyses the reaction 5-[(5-phospho-1-deoxy-D-ribulos-1-ylimino)methylamino]-1-(5-phospho-beta-D-ribosyl)imidazole-4-carboxamide + L-glutamine = D-erythro-1-(imidazol-4-yl)glycerol 3-phosphate + 5-amino-1-(5-phospho-beta-D-ribosyl)imidazole-4-carboxamide + L-glutamate + H(+). The protein operates within amino-acid biosynthesis; L-histidine biosynthesis; L-histidine from 5-phospho-alpha-D-ribose 1-diphosphate: step 5/9. Functionally, IGPS catalyzes the conversion of PRFAR and glutamine to IGP, AICAR and glutamate. The HisF subunit catalyzes the cyclization activity that produces IGP and AICAR from PRFAR using the ammonia provided by the HisH subunit. The polypeptide is Imidazole glycerol phosphate synthase subunit HisF (Aliarcobacter butzleri (strain RM4018) (Arcobacter butzleri)).